Reading from the N-terminus, the 155-residue chain is Transcriptional repressor NrdR (155 aa).

Residues 1–22 form a disordered region; the sequence is MRCPFCGHDETQVKDSRPSEDG. A zinc finger spans residues 3–34; sequence CPFCGHDETQVKDSRPSEDGAAIRRRRLCPQC. A compositionally biased stretch (basic and acidic residues) spans 7–22; it reads GHDETQVKDSRPSEDG. The region spanning 49–139 is the ATP-cone domain; that stretch reads ITILKRSGRR…VYRDFRETQD (91 aa).

Belongs to the NrdR family. Zn(2+) is required as a cofactor.

Negatively regulates transcription of bacterial ribonucleotide reductase nrd genes and operons by binding to NrdR-boxes. This chain is Transcriptional repressor NrdR, found in Phenylobacterium zucineum (strain HLK1).